Reading from the N-terminus, the 127-residue chain is Small ribosomal subunit protein eS8 (127 aa).

Belongs to the eukaryotic ribosomal protein eS8 family. Part of the 30S ribosomal subunit.

In Pyrococcus abyssi (strain GE5 / Orsay), this protein is Small ribosomal subunit protein eS8 (rps8e).